We begin with the raw amino-acid sequence, 329 residues long: Cytochrome f (329 aa).

The first 44 residues, 1 to 44 (MKRNIIFLVIHQFENLTMKKKQNIFFIFLLTVFFNFTVNSNVSA), serve as a signal peptide directing secretion. Residues tyrosine 45, cysteine 65, cysteine 68, and histidine 69 each contribute to the heme site. The helical transmembrane segment at 295–315 (VQGLIIFLITIFITQLFLVLK) threads the bilayer.

The protein belongs to the cytochrome f family. As to quaternary structure, the 4 large subunits of the cytochrome b6-f complex are cytochrome b6, subunit IV (17 kDa polypeptide, petD), cytochrome f and the Rieske protein, while the 4 small subunits are PetG, PetL, PetM and PetN. The complex functions as a dimer. Heme serves as cofactor.

It is found in the plastid. Its subcellular location is the chloroplast thylakoid membrane. Component of the cytochrome b6-f complex, which mediates electron transfer between photosystem II (PSII) and photosystem I (PSI), cyclic electron flow around PSI, and state transitions. This chain is Cytochrome f, found in Tupiella akineta (Green alga).